The sequence spans 628 residues: (+)-alpha-pinene synthase, chloroplastic (628 aa).

The transit peptide at 1–48 (MALVSAVPLNSKLCLRRTLFGFSHELKAIHSTVPNLGMCRGGKSIAPS) directs the protein to the chloroplast. 3 residues coordinate Mg(2+): Asp-379, Asp-383, and Asp-531. The DDXXD motif motif lies at 379 to 383 (DDIYD). Ser-539 is a binding site for K(+).

The protein belongs to the terpene synthase family. Tpsd subfamily. Requires Mg(2+) as cofactor. Mn(2+) is required as a cofactor. K(+) serves as cofactor.

The protein localises to the plastid. Its subcellular location is the chloroplast. It carries out the reaction (2E)-geranyl diphosphate = (1R,5R)-alpha-pinene + diphosphate. It participates in terpene metabolism; oleoresin biosynthesis. Its function is as follows. Involved in defensive oleoresin formation in conifers in response to insect attack or other injury. Involved in monoterpene (C10) olefins biosynthesis. Produces mainly (+)-alpha-pinene (97%) with a small amount of (-)-alpha-pinene (3%). In Pinus taeda (Loblolly pine), this protein is (+)-alpha-pinene synthase, chloroplastic (PT30).